The sequence spans 193 residues: Large ribosomal subunit protein bL17m (193 aa).

It belongs to the bacterial ribosomal protein bL17 family. Component of the mitochondrial large ribosomal subunit (mt-LSU). Mature N.crassa 74S mitochondrial ribosomes consist of a small (37S) and a large (54S) subunit. The 37S small subunit contains a 16S ribosomal RNA (16S mt-rRNA) and 32 different proteins. The 54S large subunit contains a 23S rRNA (23S mt-rRNA) and 42 different proteins.

Its subcellular location is the mitochondrion. Functionally, component of the mitochondrial ribosome (mitoribosome), a dedicated translation machinery responsible for the synthesis of mitochondrial genome-encoded proteins, including at least some of the essential transmembrane subunits of the mitochondrial respiratory chain. The mitoribosomes are attached to the mitochondrial inner membrane and translation products are cotranslationally integrated into the membrane. The protein is Large ribosomal subunit protein bL17m (mrpl8) of Neurospora crassa (strain ATCC 24698 / 74-OR23-1A / CBS 708.71 / DSM 1257 / FGSC 987).